A 361-amino-acid chain; its full sequence is Phenylalanine--tRNA ligase alpha subunit (361 aa).

A Mg(2+)-binding site is contributed by Glu260.

It belongs to the class-II aminoacyl-tRNA synthetase family. Phe-tRNA synthetase alpha subunit type 1 subfamily. In terms of assembly, tetramer of two alpha and two beta subunits. The cofactor is Mg(2+).

It localises to the cytoplasm. The enzyme catalyses tRNA(Phe) + L-phenylalanine + ATP = L-phenylalanyl-tRNA(Phe) + AMP + diphosphate + H(+). This Bartonella bacilliformis (strain ATCC 35685 / KC583 / Herrer 020/F12,63) protein is Phenylalanine--tRNA ligase alpha subunit.